Reading from the N-terminus, the 105-residue chain is UPF0235 protein A1C_06510 (105 aa).

The protein belongs to the UPF0235 family.

This chain is UPF0235 protein A1C_06510, found in Rickettsia akari (strain Hartford).